Consider the following 394-residue polypeptide: Phosphopentomutase (394 aa).

Positions 14, 287, 292, 328, 329, and 340 each coordinate Mn(2+).

Belongs to the phosphopentomutase family. Requires Mn(2+) as cofactor.

It localises to the cytoplasm. The enzyme catalyses 2-deoxy-alpha-D-ribose 1-phosphate = 2-deoxy-D-ribose 5-phosphate. It catalyses the reaction alpha-D-ribose 1-phosphate = D-ribose 5-phosphate. Its pathway is carbohydrate degradation; 2-deoxy-D-ribose 1-phosphate degradation; D-glyceraldehyde 3-phosphate and acetaldehyde from 2-deoxy-alpha-D-ribose 1-phosphate: step 1/2. Its function is as follows. Isomerase that catalyzes the conversion of deoxy-ribose 1-phosphate (dRib-1-P) and ribose 1-phosphate (Rib-1-P) to deoxy-ribose 5-phosphate (dRib-5-P) and ribose 5-phosphate (Rib-5-P), respectively. The chain is Phosphopentomutase from Listeria innocua serovar 6a (strain ATCC BAA-680 / CLIP 11262).